The following is a 331-amino-acid chain: Biotin synthase (331 aa).

Residues 43-267 (NTVQVSTLLS…LMPASYVRLS (225 aa)) enclose the Radical SAM core domain. Positions 58, 62, and 65 each coordinate [4Fe-4S] cluster. Residues C102, C133, C193, and R265 each contribute to the [2Fe-2S] cluster site.

The protein belongs to the radical SAM superfamily. Biotin synthase family. As to quaternary structure, homodimer. [4Fe-4S] cluster serves as cofactor. The cofactor is [2Fe-2S] cluster.

It carries out the reaction (4R,5S)-dethiobiotin + (sulfur carrier)-SH + 2 reduced [2Fe-2S]-[ferredoxin] + 2 S-adenosyl-L-methionine = (sulfur carrier)-H + biotin + 2 5'-deoxyadenosine + 2 L-methionine + 2 oxidized [2Fe-2S]-[ferredoxin]. It participates in cofactor biosynthesis; biotin biosynthesis; biotin from 7,8-diaminononanoate: step 2/2. Catalyzes the conversion of dethiobiotin (DTB) to biotin by the insertion of a sulfur atom into dethiobiotin via a radical-based mechanism. The sequence is that of Biotin synthase from Alkalilimnicola ehrlichii (strain ATCC BAA-1101 / DSM 17681 / MLHE-1).